The primary structure comprises 298 residues: Glyoxalase domain-containing protein 4 (298 aa).

The VOC 1 domain maps to 5 to 130 (RALHFVFKVK…GGYKFYLQDR (126 aa)). Lysine 109 is modified (N6-succinyllysine). Serine 131 is subject to Phosphoserine. The region spanning 137–258 (PVLKVTLAVS…DGHEICFVGD (122 aa)) is the VOC 2 domain. N6-succinyllysine is present on lysine 273.

This sequence belongs to the glyoxalase I family. As to quaternary structure, interacts with NUDT9.

The protein resides in the mitochondrion. The protein is Glyoxalase domain-containing protein 4 (Glod4) of Mus musculus (Mouse).